The following is a 188-amino-acid chain: ATP-dependent Clp protease proteolytic subunit 1 (188 aa).

Ser90 (nucleophile) is an active-site residue. The active site involves His115.

The protein belongs to the peptidase S14 family. In terms of assembly, fourteen ClpP subunits assemble into 2 heptameric rings which stack back to back to give a disk-like structure with a central cavity, resembling the structure of eukaryotic proteasomes.

It is found in the cytoplasm. It carries out the reaction Hydrolysis of proteins to small peptides in the presence of ATP and magnesium. alpha-casein is the usual test substrate. In the absence of ATP, only oligopeptides shorter than five residues are hydrolyzed (such as succinyl-Leu-Tyr-|-NHMec, and Leu-Tyr-Leu-|-Tyr-Trp, in which cleavage of the -Tyr-|-Leu- and -Tyr-|-Trp bonds also occurs).. In terms of biological role, cleaves peptides in various proteins in a process that requires ATP hydrolysis. Has a chymotrypsin-like activity. Plays a major role in the degradation of misfolded proteins. The polypeptide is ATP-dependent Clp protease proteolytic subunit 1 (Corynebacterium jeikeium (strain K411)).